We begin with the raw amino-acid sequence, 871 residues long: MFSSDELRENYLKFFEEKGHKRIASSSLIPHNDPTLLLTTAGMVQFKPYYLGVAKPENSRMTSCQKCFRTTDIESVGDASHLTMFEMLGNFSIGNYFKKEAIAWAWEYVTQRLNIPAEKLWVTVYLDDDEAIALWKEQGVPEGRIVRLGAADNFWGPAGDSGPCGPCSEIHYDFGQEMGCGKADCNPSCKCGRFCEIWNLVFVQFNQDKSGKRQNLPAPSIDTGMGLERLTILMQFRKNVYETDIFAPVIEKACQLSGRQYGIDAETDKALRIVSEHSRGITFLIADGVIPDKAGRGYVLRRLLRRAVLFGRRLGLEKPFLVDMAGAVIARMSGIYPELNKRQAYVLEMIASEEARFSETLATGLELLEEIVRQTKGGQISGQDAFKLYDTYGFPVEMTTEIAAERGLSVDLGGFEAEMEVQRTKARSSRKFSFDAAATAEAVKNMRHGEKTCFVGYELTRQKSTIMDILTEGGSVDSIEEGDEASIVLDESPFYAEMGGQVGDTGEIITGGGRFEVKNTLHLPNGVFLHQGRVISGCLKIAETAAAHIDEERRRDIARNHTATHILQTALRQVLGEQVQQRGSVVTPERLRFDFSHLKPMTKDEIRRAEEFVNDKIRRNLPVYAEEMPYRHALEEGVTALFGEKYGDRVRVLRVGRPAVSAELCGGTHVSASGEISLFKIVSESSVGAGLRRIEAVTGREAEAYINLQQDSLSELSGMLEAAPEESPRKLAELKEEIDTLKKTVQNLERQMSRGEAEELLSKAEDYKGIKLLVSRMTSVNADTLHETADFLRDKLGSGIIVLGTVSEDKPFFLCMVTPDLIEKGYHAGNIVKKLSQIAGGGGGGKPNMAQGGGRDKAKLDEALQAVKGML.

Residues His561, His565, Cys665, and His669 each coordinate Zn(2+).

Belongs to the class-II aminoacyl-tRNA synthetase family. The cofactor is Zn(2+).

It localises to the cytoplasm. The enzyme catalyses tRNA(Ala) + L-alanine + ATP = L-alanyl-tRNA(Ala) + AMP + diphosphate. Catalyzes the attachment of alanine to tRNA(Ala) in a two-step reaction: alanine is first activated by ATP to form Ala-AMP and then transferred to the acceptor end of tRNA(Ala). Also edits incorrectly charged Ser-tRNA(Ala) and Gly-tRNA(Ala) via its editing domain. This chain is Alanine--tRNA ligase, found in Dehalococcoides mccartyi (strain ATCC BAA-2266 / KCTC 15142 / 195) (Dehalococcoides ethenogenes (strain 195)).